A 103-amino-acid chain; its full sequence is MSNQRIRIRLKSFDHRLIDQSAQEIVETAKRTGAQVCGPIPMPTRIERFNVLTSPHVNKDARDQYEIRTYKRLIDIVQPTDKTVDALMKLDLAAGVDVQIALG.

The protein belongs to the universal ribosomal protein uS10 family. As to quaternary structure, part of the 30S ribosomal subunit.

Its function is as follows. Involved in the binding of tRNA to the ribosomes. This chain is Small ribosomal subunit protein uS10, found in Acinetobacter baumannii (strain AB307-0294).